Here is a 387-residue protein sequence, read N- to C-terminus: Putative glutamate--cysteine ligase 2 (387 aa).

Belongs to the glutamate--cysteine ligase type 2 family. YbdK subfamily.

It catalyses the reaction L-cysteine + L-glutamate + ATP = gamma-L-glutamyl-L-cysteine + ADP + phosphate + H(+). Functionally, ATP-dependent carboxylate-amine ligase which exhibits weak glutamate--cysteine ligase activity. This chain is Putative glutamate--cysteine ligase 2, found in Trichormus variabilis (strain ATCC 29413 / PCC 7937) (Anabaena variabilis).